A 114-amino-acid chain; its full sequence is Large ribosomal subunit protein uL22 (114 aa).

The protein belongs to the universal ribosomal protein uL22 family. As to quaternary structure, part of the 50S ribosomal subunit.

Functionally, this protein binds specifically to 23S rRNA; its binding is stimulated by other ribosomal proteins, e.g. L4, L17, and L20. It is important during the early stages of 50S assembly. It makes multiple contacts with different domains of the 23S rRNA in the assembled 50S subunit and ribosome. The globular domain of the protein is located near the polypeptide exit tunnel on the outside of the subunit, while an extended beta-hairpin is found that lines the wall of the exit tunnel in the center of the 70S ribosome. This chain is Large ribosomal subunit protein uL22, found in Streptococcus pyogenes serotype M6 (strain ATCC BAA-946 / MGAS10394).